Consider the following 373-residue polypeptide: Alanine dehydrogenase (373 aa).

The substrate site is built by arginine 15 and lysine 74. The active-site Proton donor/acceptor is histidine 95. NAD(+)-binding positions include serine 133, 177-178 (QA), aspartate 197, serine 219, 238-239 (VL), 266-269 (IAID), and 298-301 (VANM). Aspartate 269 acts as the Proton donor/acceptor in catalysis.

It belongs to the AlaDH/PNT family. As to quaternary structure, homohexamer. Trimer of dimer.

The enzyme catalyses L-alanine + NAD(+) + H2O = pyruvate + NH4(+) + NADH + H(+). The protein operates within amino-acid degradation; L-alanine degradation via dehydrogenase pathway; NH(3) and pyruvate from L-alanine: step 1/1. Functionally, catalyzes the reversible reductive amination of pyruvate to L-alanine. May play a role in cell wall synthesis as L-alanine is an important constituent of the peptidoglycan layer. The sequence is that of Alanine dehydrogenase (ald) from Staphylococcus haemolyticus (strain JCSC1435).